The primary structure comprises 278 residues: NH(3)-dependent NAD(+) synthetase (278 aa).

Position 39–46 (39–46 (GVSGGVDS)) interacts with ATP. Asp-45 contributes to the Mg(2+) binding site. Position 121 (Arg-121) interacts with deamido-NAD(+). Thr-141 lines the ATP pocket. Residue Glu-146 coordinates Mg(2+). 2 residues coordinate deamido-NAD(+): Lys-154 and Asp-161. Residues Lys-170 and Ser-192 each contribute to the ATP site. Residue 252-253 (HK) coordinates deamido-NAD(+).

Belongs to the NAD synthetase family. Homodimer.

It carries out the reaction deamido-NAD(+) + NH4(+) + ATP = AMP + diphosphate + NAD(+) + H(+). The protein operates within cofactor biosynthesis; NAD(+) biosynthesis; NAD(+) from deamido-NAD(+) (ammonia route): step 1/1. In terms of biological role, catalyzes the ATP-dependent amidation of deamido-NAD to form NAD. Uses ammonia as a nitrogen source. In Saccharolobus solfataricus (strain ATCC 35092 / DSM 1617 / JCM 11322 / P2) (Sulfolobus solfataricus), this protein is NH(3)-dependent NAD(+) synthetase.